Consider the following 482-residue polypeptide: tRNA sulfurtransferase (482 aa).

The THUMP domain occupies 61–165 (SAIRDALTRI…QDRLLLIKGR (105 aa)). ATP is bound by residues 183–184 (LI), K265, G287, and Q296. Residues C344 and C456 are joined by a disulfide bond. Residues 404–482 (FAPTDVLLDI…GFSNVKVYRP (79 aa)) enclose the Rhodanese domain. The active-site Cysteine persulfide intermediate is the C456.

The protein belongs to the ThiI family.

Its subcellular location is the cytoplasm. The enzyme catalyses [ThiI sulfur-carrier protein]-S-sulfanyl-L-cysteine + a uridine in tRNA + 2 reduced [2Fe-2S]-[ferredoxin] + ATP + H(+) = [ThiI sulfur-carrier protein]-L-cysteine + a 4-thiouridine in tRNA + 2 oxidized [2Fe-2S]-[ferredoxin] + AMP + diphosphate. It catalyses the reaction [ThiS sulfur-carrier protein]-C-terminal Gly-Gly-AMP + S-sulfanyl-L-cysteinyl-[cysteine desulfurase] + AH2 = [ThiS sulfur-carrier protein]-C-terminal-Gly-aminoethanethioate + L-cysteinyl-[cysteine desulfurase] + A + AMP + 2 H(+). The protein operates within cofactor biosynthesis; thiamine diphosphate biosynthesis. Its function is as follows. Catalyzes the ATP-dependent transfer of a sulfur to tRNA to produce 4-thiouridine in position 8 of tRNAs, which functions as a near-UV photosensor. Also catalyzes the transfer of sulfur to the sulfur carrier protein ThiS, forming ThiS-thiocarboxylate. This is a step in the synthesis of thiazole, in the thiamine biosynthesis pathway. The sulfur is donated as persulfide by IscS. In Pectobacterium carotovorum subsp. carotovorum (strain PC1), this protein is tRNA sulfurtransferase.